Reading from the N-terminus, the 318-residue chain is Protoheme IX farnesyltransferase (318 aa).

Transmembrane regions (helical) follow at residues 34–54 (VMSL…GQIN), 55–75 (PVIG…SGAL), 95–115 (IPAG…LSAF), 118–138 (IILG…TIFF), 155–175 (IVIG…CVTG), 182–202 (IVLF…LALF), 228–250 (IVVY…FASL), 254–273 (AFAT…VLRM), and 287–307 (FAFS…DYMI).

Belongs to the UbiA prenyltransferase family. Protoheme IX farnesyltransferase subfamily.

The protein resides in the cell inner membrane. It catalyses the reaction heme b + (2E,6E)-farnesyl diphosphate + H2O = Fe(II)-heme o + diphosphate. The protein operates within porphyrin-containing compound metabolism; heme O biosynthesis; heme O from protoheme: step 1/1. Converts heme B (protoheme IX) to heme O by substitution of the vinyl group on carbon 2 of heme B porphyrin ring with a hydroxyethyl farnesyl side group. The polypeptide is Protoheme IX farnesyltransferase (Sinorhizobium fredii (strain NBRC 101917 / NGR234)).